A 497-amino-acid polypeptide reads, in one-letter code: 3-octaprenyl-4-hydroxybenzoate carboxy-lyase (497 aa).

Asn172 serves as a coordination point for Mn(2+). Residues 175–177 (IYR), 189–191 (RWL), and 194–195 (RG) each bind prenylated FMN. A Mn(2+)-binding site is contributed by Glu238. The active-site Proton donor is the Asp287.

It belongs to the UbiD family. As to quaternary structure, homohexamer. Requires prenylated FMN as cofactor. Mn(2+) serves as cofactor.

Its subcellular location is the cell membrane. It carries out the reaction a 4-hydroxy-3-(all-trans-polyprenyl)benzoate + H(+) = a 2-(all-trans-polyprenyl)phenol + CO2. It functions in the pathway cofactor biosynthesis; ubiquinone biosynthesis. Catalyzes the decarboxylation of 3-octaprenyl-4-hydroxy benzoate to 2-octaprenylphenol, an intermediate step in ubiquinone biosynthesis. In Enterobacter sp. (strain 638), this protein is 3-octaprenyl-4-hydroxybenzoate carboxy-lyase.